Here is a 305-residue protein sequence, read N- to C-terminus: Axin interactor, dorsalization-associated protein A (305 aa).

Positions 153–220 (GTLLPRLPSE…RKEDTYVHFN (68 aa)) are axin-binding. In terms of domain architecture, C2 Aida-type spans 156 to 303 (LPRLPSEPGM…LYLHLLQTLL (148 aa)).

It belongs to the AIDA family.

In terms of biological role, acts as a ventralizing factor during embryogenesis. Inhibits axin-mediated JNK activation by binding axin and disrupting axin homodimerization. This in turn antagonizes a Wnt/beta-catenin-independent dorsalization pathway activated by axin/JNK-signaling. The sequence is that of Axin interactor, dorsalization-associated protein A (aida-a) from Xenopus laevis (African clawed frog).